The sequence spans 534 residues: Steroid hormone receptor family member cnr14 (534 aa).

Disordered stretches follow at residues 30 to 53 (SGKT…QWSH) and 119 to 139 (PATS…GHTT). The span at 119–130 (PATSVTSSLSPP) shows a compositional bias: low complexity. The segment at residues 148 to 223 (ISFCKVCGDK…SGMSKDSVRQ (76 aa)) is a DNA-binding region (nuclear receptor). 2 NR C4-type zinc fingers span residues 151–171 (CKVC…CEGC) and 187–211 (CLKQ…FKKC). Residues 252-493 (EVDAVYEAVL…PPLVVEMFQL (242 aa)) enclose the NR LBD domain. The tract at residues 502-534 (HNNQENQYTPAPEHQSPQPQQPTPNQQQTPVHC) is disordered. Residues 511–534 (PAPEHQSPQPQQPTPNQQQTPVHC) show a composition bias toward low complexity.

Belongs to the nuclear hormone receptor family. NR1 subfamily. As to expression, most abundant in embryos.

It localises to the nucleus. Transcriptional regulator which is involved in the sex determination and X chromosome dosage compensation pathways. Directly binds to five 5'-A(G/C)(G/T)(T/G)C(A/G)-3' sites in the promoter of sex-determining factor xol-1 to negatively regulate its expression and promote hermaphrodite development. Together with fox-1 is involved in making the distinction between one and two X-chromosomes. Plays a role in the fox-1-mediated repression of the functionally active isoform (isoform b) of the sex-determining factor xol-1 gene to promote hermaphrodite development. Plays a role in the association of the dosage compensation complex proteins dpy-27 and sdc-3 with the hermaphrodite X chromosomes. The chain is Steroid hormone receptor family member cnr14 from Caenorhabditis elegans.